Here is a 169-residue protein sequence, read N- to C-terminus: N-alpha-acetyltransferase 50 (169 aa).

The N-acetyltransferase domain occupies 5–154; that stretch reads IELGDVTPHN…DAHVLQKNLK (150 aa). A substrate-binding site is contributed by Y30. Y72 is an active-site residue. M74 lines the substrate pocket. Position 76 to 89 (76 to 89) interacts with acetyl-CoA; the sequence is LGCLAPYRRLGIGT. 78–89 provides a ligand contact to CoA; it reads CLAPYRRLGIGT. The active site involves H111. 116 to 125 lines the CoA pocket; the sequence is NESAIDFYRK. Positions 137 to 140 are substrate; the sequence is YYKR.

It belongs to the acetyltransferase family. GNAT subfamily.

Its subcellular location is the cytoplasm. The protein resides in the nucleus. It catalyses the reaction N-terminal L-methionyl-L-alanyl-[protein] + acetyl-CoA = N-terminal N(alpha)-acetyl-L-methionyl-L-alanyl-[protein] + CoA + H(+). The enzyme catalyses N-terminal L-methionyl-L-seryl-[protein] + acetyl-CoA = N-terminal N(alpha)-acetyl-L-methionyl-L-seryl-[protein] + CoA + H(+). The catalysed reaction is N-terminal L-methionyl-L-valyl-[protein] + acetyl-CoA = N-terminal N(alpha)-acetyl-L-methionyl-L-valyl-[protein] + CoA + H(+). It carries out the reaction N-terminal L-methionyl-L-threonyl-[protein] + acetyl-CoA = N-terminal N(alpha)-acetyl-L-methionyl-L-threonyl-[protein] + CoA + H(+). It catalyses the reaction N-terminal L-methionyl-L-lysyl-[protein] + acetyl-CoA = N-terminal N(alpha)-acetyl-L-methionyl-L-lysyl-[protein] + CoA + H(+). The enzyme catalyses N-terminal L-methionyl-L-leucyl-[protein] + acetyl-CoA = N-terminal N(alpha)-acetyl-L-methionyl-L-leucyl-[protein] + CoA + H(+). The catalysed reaction is N-terminal L-methionyl-L-phenylalanyl-[protein] + acetyl-CoA = N-terminal N(alpha)-acetyl-L-methionyl-L-phenylalanyl-[protein] + CoA + H(+). It carries out the reaction N-terminal L-methionyl-L-tyrosyl-[protein] + acetyl-CoA = N-terminal N(alpha)-acetyl-L-methionyl-L-tyrosyl-[protein] + CoA + H(+). N-alpha-acetyltransferase that acetylates the N-terminus of proteins that retain their initiating methionine. Has a broad substrate specificity: able to acetylate the initiator methionine of most peptides, except for those with a proline in second position. Also displays N-epsilon-acetyltransferase activity by mediating acetylation of the side chain of specific lysines on proteins. The relevance of N-epsilon-acetyltransferase activity is however unclear. Required for sister chromatid cohesion during mitosis by promoting binding of CDCA5/sororin to cohesin. This Xenopus tropicalis (Western clawed frog) protein is N-alpha-acetyltransferase 50 (naa50).